Here is a 1503-residue protein sequence, read N- to C-terminus: Translocase of chloroplast 159, chloroplastic (1503 aa).

The segment covering 1–24 has biased composition (polar residues); sequence MDSKSVTPEPTNPFYASSGQSGKT. Residues 1 to 210 are disordered; the sequence is MDSKSVTPEP…GGKVDVDDKS (210 aa). Residues 21–37 form a helical membrane-spanning segment; the sequence is SGKTYASVVAAAAAAAA. Ser71 bears the Phosphoserine mark. Basic and acidic residues-rich tracts occupy residues 85-98 and 176-210; these read KVSDEVDGSLKEDS and SESKVKDVEEEDVGTKKDDEGESELGGKVDVDDKS. A phosphoserine mark is found at Ser210, Ser281, and Ser288. Disordered stretches follow at residues 298–338 and 429–464; these read KFTS…DVEK and VHNKFDPIGQGEGGEVELESDKATEEGGGKLVSEGD. The span at 447–456 shows a compositional bias: basic and acidic residues; that stretch reads ESDKATEEGG. Residues Ser448, Ser461, Ser589, Ser609, Ser630, Ser632, and Ser665 each carry the phosphoserine modification. The interval 610 to 633 is disordered; it reads FGGKEVDQEPSGEGVTRVDGSESE. Residues 781 to 804 adopt a coiled-coil conformation; it reads EEEKQKLEKLQSLRVKFLRLLQRL. The 235-residue stretch at 853 to 1087 folds into the AIG1-type G domain; sequence IFSLNILVLG…RPQEPLDHRK (235 aa). The interval 862–869 is G1; that stretch reads GKAGVGKS. Residues 865–870 and 884–889 contribute to the GTP site; these read GVGKSA and DAFGLS. Ser869 serves as a coordination point for Mg(2+). The tract at residues 884–887 is homodimerization; that stretch reads DAFG. The tract at residues 889–893 is G2; sequence STTSV. The G3 stretch occupies residues 909 to 912; sequence DTPG. Residues 947 to 952 are homodimerization; sequence RLDTQT. The interval 981-984 is G4; it reads THAA. GTP contacts are provided by residues His982 and 1035–1036; that span reads EN. Residues 1035–1037 are G5; sequence ENH. A coiled-coil region spans residues 1175–1203; that stretch reads DYRVKLLQKKQWREELKRMKEMKKNGKKL. Residues 1203 to 1222 are disordered; that stretch reads LGESEFGYPGEEDDPENGAP.

It belongs to the TRAFAC class TrmE-Era-EngA-EngB-Septin-like GTPase superfamily. AIG1/Toc34/Toc159-like paraseptin GTPase family. TOC159 subfamily. As to quaternary structure, homodimer and heterodimer with TOC33. Part of the TOC core complex that includes 1 protein for the specific recognition of transit peptides surrounded by a ring composed of four proteins forming translocation channels, and four to five GTP-binding proteins providing energy. This core complex can interact with components of the TIC complex to form a larger import complex. Chloroplastic protein precursor such as prSS (precursor of the RuBisCO small subunit) interacts with these complexes. The TOC complex contains a specific subset of polar lipids such as digalactosyldiacylglyceride (DGDG), phosphatidylcholine (PC) and phosphatidylglycerol (PG). Interacts with SP1. Mg(2+) is required as a cofactor. Phosphorylated by KOC1.

It is found in the plastid. The protein localises to the chloroplast outer membrane. The protein resides in the cytoplasm. In terms of biological role, GTPase involved in protein precursor import into chloroplasts. Seems to recognize chloroplast-destined precursor proteins and regulate their presentation to the translocation channel through GTP hydrolysis. Required for chloroplast biogenesis. Probably specialized in the import of nuclear encoded photosynthetic preproteins from the cytoplasm to the chloroplast. This is Translocase of chloroplast 159, chloroplastic from Arabidopsis thaliana (Mouse-ear cress).